A 553-amino-acid polypeptide reads, in one-letter code: Efflux pump mlcE (553 aa).

Residues 1-19 (MSEPLPPKEGEPRPQKEES) show a composition bias toward basic and acidic residues. The tract at residues 1 to 29 (MSEPLPPKEGEPRPQKEESQNDTLEATES) is disordered. N-linked (GlcNAc...) asparagine glycosylation occurs at Asn21. Transmembrane regions (helical) follow at residues 41 to 61 (LVVASVTFVAFLMLLDMSIIV), 77 to 96 (VGWYGSAYLLANCALQPLAG), 101 to 121 (LLGLKYTFFAFLCIFELGSVL), 136 to 156 (AVAGMGGSGLVNGALTILSTA), 164 to 184 (VLIGVMMGLSQIAIVCGPLLG), 196 to 216 (CFYINLPIGAVAAFLLLVITI), 245 to 265 (LVGFVVFAAFATMISLALEWG), 273 to 293 (SSVIIGLFCGGGFALIAFVLW), 319 to 339 (LFMGFFSGSLLVFSYYLPIYF), 352 to 372 (VYMLPGILGQVIMAMVSGFAI), 376 to 396 (GYYLPWALGSAVLVAIGAGLV), 440 to 460 (ALGISLAVFGQTFGGSLFLDF), and 516 to 536 (TFYLAVGATACTFVFAFGMGW). Asn543 carries N-linked (GlcNAc...) asparagine glycosylation.

The protein belongs to the major facilitator superfamily. TCR/Tet family.

The protein resides in the membrane. Its function is as follows. Efflux pump; part of the gene cluster that mediates the biosynthesis of compactin, also known as mevastatin or ML-236B, and which acts as a potent competitive inhibitor of HMG-CoA reductase. This chain is Efflux pump mlcE, found in Penicillium citrinum.